Consider the following 222-residue polypeptide: MWFKSAGSALPDPHDALPGRATPLQVTETHFVHGRRIRPPFPSGTARAFFGMGCFWGAERRFWTLPGVYSTAVGYAGGSTPNPTYDEVCTGRTGHAEVVLVVYEPDKVGFDALLQVFWTSHDPTQGMRQGNDVGTQYRSVIFATTPEQLQWALVSRDAYERALERAGRGGITTEIRMAPDFYYAESYHQQYLAQHPNGYCGLRGTGVECPPFRIEQSRADPI.

The active site involves C54.

Belongs to the MsrA Met sulfoxide reductase family.

It catalyses the reaction L-methionyl-[protein] + [thioredoxin]-disulfide + H2O = L-methionyl-(S)-S-oxide-[protein] + [thioredoxin]-dithiol. The catalysed reaction is [thioredoxin]-disulfide + L-methionine + H2O = L-methionine (S)-S-oxide + [thioredoxin]-dithiol. Has an important function as a repair enzyme for proteins that have been inactivated by oxidation. Catalyzes the reversible oxidation-reduction of methionine sulfoxide in proteins to methionine. In Methylococcus capsulatus (strain ATCC 33009 / NCIMB 11132 / Bath), this protein is Peptide methionine sulfoxide reductase MsrA.